Consider the following 508-residue polypeptide: Dihydroniloticin synthase CYP71CD4 (508 aa).

The helical transmembrane segment at 6 to 26 (LDFFSVTSFIIFFLFLFRLVW) threads the bilayer. Cys449 provides a ligand contact to heme.

The protein belongs to the cytochrome P450 family. It depends on heme as a cofactor. As to expression, mainly expressed in roots and, to a lesser extent, in stems.

The protein resides in the membrane. The enzyme catalyses tirucalla-7,24-dien-3beta-ol + 2 reduced [NADPH--hemoprotein reductase] + 2 O2 = dihydroniloticin + 2 oxidized [NADPH--hemoprotein reductase] + 2 H2O + 2 H(+). Its pathway is secondary metabolite biosynthesis; terpenoid biosynthesis. In terms of biological role, monooxygenase involved in the biosynthesis of quassinoids triterpene natural products such as ailanthone, chaparrinone, glaucarubinone and amarolide, allelopathic degraded triterpene lactones inhibiting the growth of other plants, and possessing antimalarial, antifeedant, insecticidal, anti-inflammatory and anticancer activities. Catalyzes the conversion of tirucalladienol to dihydroniloticin. The polypeptide is Dihydroniloticin synthase CYP71CD4 (Ailanthus altissima (Tree-of-heaven)).